The sequence spans 466 residues: Methylenetetrahydrofolate--tRNA-(uracil-5-)-methyltransferase TrmFO (466 aa).

10–15 (GGGLAG) is a binding site for FAD.

This sequence belongs to the MnmG family. TrmFO subfamily. FAD is required as a cofactor.

The protein localises to the cytoplasm. It carries out the reaction uridine(54) in tRNA + (6R)-5,10-methylene-5,6,7,8-tetrahydrofolate + NADH + H(+) = 5-methyluridine(54) in tRNA + (6S)-5,6,7,8-tetrahydrofolate + NAD(+). It catalyses the reaction uridine(54) in tRNA + (6R)-5,10-methylene-5,6,7,8-tetrahydrofolate + NADPH + H(+) = 5-methyluridine(54) in tRNA + (6S)-5,6,7,8-tetrahydrofolate + NADP(+). Catalyzes the folate-dependent formation of 5-methyl-uridine at position 54 (M-5-U54) in all tRNAs. The sequence is that of Methylenetetrahydrofolate--tRNA-(uracil-5-)-methyltransferase TrmFO from Phenylobacterium zucineum (strain HLK1).